We begin with the raw amino-acid sequence, 203 residues long: Putative 3-methyladenine DNA glycosylase (203 aa).

This sequence belongs to the DNA glycosylase MPG family.

This is Putative 3-methyladenine DNA glycosylase from Clostridium botulinum (strain ATCC 19397 / Type A).